Reading from the N-terminus, the 239-residue chain is Lipoprotein-releasing system ATP-binding protein LolD (239 aa).

The region spanning 10-239 (VELSGVRKDY…ADGPHRRSGA (230 aa)) is the ABC transporter domain. 46–53 (GPSGSGKS) provides a ligand contact to ATP.

It belongs to the ABC transporter superfamily. Lipoprotein translocase (TC 3.A.1.125) family. The complex is composed of two ATP-binding proteins (LolD) and two transmembrane proteins (LolC and LolE).

The protein resides in the cell inner membrane. In terms of biological role, part of the ABC transporter complex LolCDE involved in the translocation of mature outer membrane-directed lipoproteins, from the inner membrane to the periplasmic chaperone, LolA. Responsible for the formation of the LolA-lipoprotein complex in an ATP-dependent manner. This is Lipoprotein-releasing system ATP-binding protein LolD from Anaeromyxobacter dehalogenans (strain 2CP-C).